The primary structure comprises 197 residues: dTTP/UTP pyrophosphatase (197 aa).

The Proton acceptor role is filled by Asp70.

This sequence belongs to the Maf family. YhdE subfamily. A divalent metal cation serves as cofactor.

The protein localises to the cytoplasm. It catalyses the reaction dTTP + H2O = dTMP + diphosphate + H(+). The enzyme catalyses UTP + H2O = UMP + diphosphate + H(+). Its function is as follows. Nucleoside triphosphate pyrophosphatase that hydrolyzes dTTP and UTP. May have a dual role in cell division arrest and in preventing the incorporation of modified nucleotides into cellular nucleic acids. The polypeptide is dTTP/UTP pyrophosphatase (yceF2) (Shigella boydii serotype 4 (strain Sb227)).